The primary structure comprises 223 residues: Endonuclease V (223 aa).

2 residues coordinate Mg(2+): D45 and D113.

This sequence belongs to the endonuclease V family. It depends on Mg(2+) as a cofactor.

The protein localises to the cytoplasm. The catalysed reaction is Endonucleolytic cleavage at apurinic or apyrimidinic sites to products with a 5'-phosphate.. Its function is as follows. DNA repair enzyme involved in the repair of deaminated bases. Selectively cleaves double-stranded DNA at the second phosphodiester bond 3' to a deoxyinosine leaving behind the intact lesion on the nicked DNA. This Dehalococcoides mccartyi (strain CBDB1) protein is Endonuclease V.